Reading from the N-terminus, the 120-residue chain is Ribonuclease P protein component (120 aa).

The protein belongs to the RnpA family. In terms of assembly, consists of a catalytic RNA component (M1 or rnpB) and a protein subunit.

The enzyme catalyses Endonucleolytic cleavage of RNA, removing 5'-extranucleotides from tRNA precursor.. Its function is as follows. RNaseP catalyzes the removal of the 5'-leader sequence from pre-tRNA to produce the mature 5'-terminus. It can also cleave other RNA substrates such as 4.5S RNA. The protein component plays an auxiliary but essential role in vivo by binding to the 5'-leader sequence and broadening the substrate specificity of the ribozyme. This is Ribonuclease P protein component from Chlamydia trachomatis serovar A (strain ATCC VR-571B / DSM 19440 / HAR-13).